Reading from the N-terminus, the 111-residue chain is uncharacterized protein (111 aa).

The chain crosses the membrane as a helical span at residues 60–80 (TFGRFLAHISCLICILSKRIF).

The protein resides in the mitochondrion membrane. This is an uncharacterized protein from Arabidopsis thaliana (Mouse-ear cress).